The following is a 109-amino-acid chain: Small ribosomal subunit protein uS15c (109 aa).

It belongs to the universal ribosomal protein uS15 family. In terms of assembly, part of the 30S ribosomal subunit.

It localises to the plastid. The protein localises to the chloroplast. The sequence is that of Small ribosomal subunit protein uS15c (rps15-A) from Trachelium caeruleum (Blue throatwort).